A 117-amino-acid chain; its full sequence is MTRIKRGYIARRRRTKLRLFASSFRGAHSRLTRTMTQQRIRALVSAHRDRGKRKRDFRRLWITRINAVIHEMGVFYSYNQFIHNLYKKQLLLNRKILAQIALLNRSCLYTISNDIKK.

This sequence belongs to the bacterial ribosomal protein bL20 family.

The protein localises to the plastid. Its subcellular location is the chloroplast. Functionally, binds directly to 23S ribosomal RNA and is necessary for the in vitro assembly process of the 50S ribosomal subunit. It is not involved in the protein synthesizing functions of that subunit. This is Large ribosomal subunit protein bL20c from Olimarabidopsis pumila (Dwarf rocket).